Here is a 755-residue protein sequence, read N- to C-terminus: Protein MTSS 1 (755 aa).

The IMD domain maps to 1 to 250 (MEAVIEKECS…EQVILDLKGS (250 aa)). Residues 108-155 (LQEQMEEWKKVANQLDKDHAKEYKKARQEIKKKSSDTLKLQKKAKKGR) adopt a coiled-coil conformation. Disordered regions lie at residues 139–159 (KKSS…GDIQ) and 255–305 (SYQT…RSSN). The residue at position 258 (Thr-258) is a Phosphothreonine. Phosphoserine is present on residues Ser-261, Ser-262, Ser-271, and Ser-322. The tract at residues 327-351 (QDAFQSKSPSPMPPEAPNQLSNGFS) is disordered. At Thr-425 the chain carries Phosphothreonine. Disordered stretches follow at residues 428–470 (RRKE…TRPG), 490–513 (DTQR…TTPC), and 563–755 (QAKR…PRFS). Residues 443–453 (TTASGPPAAAE) show a composition bias toward low complexity. A Phosphothreonine modification is found at Thr-603. Over residues 608-623 (PIPIKTPVIPVKTPTV) the composition is skewed to low complexity. Phosphoserine occurs at positions 644 and 647. Positions 656 to 671 (GVTSMPSSMWSGQASV) are enriched in polar residues. Positions 727–744 (QGEDMLNAIRRGVKLKKT) constitute a WH2 domain.

Belongs to the MTSS family. In terms of assembly, binds to actin. Binds to the cytoplasmic domain of receptor protein tyrosine phosphatase delta. Expressed in many tissues, including spleen, thymus, prostate, testis, uterus, colon, and peripheral blood.

Its subcellular location is the cytoplasm. The protein localises to the cytoskeleton. Functionally, may be related to cancer progression or tumor metastasis in a variety of organ sites, most likely through an interaction with the actin cytoskeleton. This chain is Protein MTSS 1, found in Homo sapiens (Human).